Here is a 124-residue protein sequence, read N- to C-terminus: Aspartate 1-decarboxylase (124 aa).

Catalysis depends on Ser-25, which acts as the Schiff-base intermediate with substrate; via pyruvic acid. Pyruvic acid (Ser) is present on Ser-25. Residue Thr-57 coordinates substrate. Residue Tyr-58 is the Proton donor of the active site. Residue 73–75 (GAA) participates in substrate binding.

The protein belongs to the PanD family. Heterooctamer of four alpha and four beta subunits. Requires pyruvate as cofactor. Is synthesized initially as an inactive proenzyme, which is activated by self-cleavage at a specific serine bond to produce a beta-subunit with a hydroxyl group at its C-terminus and an alpha-subunit with a pyruvoyl group at its N-terminus.

It localises to the cytoplasm. The catalysed reaction is L-aspartate + H(+) = beta-alanine + CO2. The protein operates within cofactor biosynthesis; (R)-pantothenate biosynthesis; beta-alanine from L-aspartate: step 1/1. Catalyzes the pyruvoyl-dependent decarboxylation of aspartate to produce beta-alanine. In Syntrophobacter fumaroxidans (strain DSM 10017 / MPOB), this protein is Aspartate 1-decarboxylase.